The following is a 305-amino-acid chain: THAP domain-containing protein 11 (305 aa).

The segment at 1-80 (MPGFTCCVPG…TYTVRVPTIF (80 aa)) adopts a THAP-type zinc-finger fold. The disordered stretch occupies residues 85–135 (VNERKVARRPAGAAAARRRQQQQQQQQQQQQQQQLQQQQPSPSSSTAQTTQ). Residues 105 to 135 (QQQQQQQQQQQQQQLQQQQPSPSSSTAQTTQ) are compositionally biased toward low complexity. The short motif at 234 to 237 (DHSY) is the HCFC1-binding motif (HBM) element. A coiled-coil region spans residues 246–296 (EELLRKLNEQRDILALMEVKMKEMKGSIRHLRLTEAKLREELREKDRLLAM).

It belongs to the THAP11 family. Forms homodimers. Interacts via HBM with HCFC1. Forms a complex with HCFC1 and ZNF143. As to expression, mainly expressed in embryonic pluripotent cells. In adult tissues, expressed in oocytes and in certain regions of the brain,including hippocampus, olfactory bulb and Purkinje cells.

The protein localises to the nucleus. Its subcellular location is the cytoplasm. Transcriptional repressor that plays a central role for embryogenesis and the pluripotency of embryonic stem (ES) cells. Sequence-specific DNA-binding factor that represses gene expression in pluripotent ES cells by directly binding to key genetic loci and recruiting epigenetic modifiers. Required for normal brain development and neural precursor differentiation. In terms of biological role, transcription factor, which has both transcriptional activation and repression activities. Also modulates chromatin accessibility. In complex with HCFC1 and ZNF143, regulates the expression of several genes, including AP2S1, ESCO2, OPHN1, RBL1, UBXN8 and ZNF32. May regulate the expression of genes that encode both cytoplasmic and mitochondrial ribosomal proteins. Required for normal mitochondrial development and function. Regulates mitochondrial gene expression, including that of components of the electron transport chain. Involved in the maintainance of pluripotency in early embryonic cells, possibly through its action on mitochondrial maturation which is required to meet high energy demands of these cells. Required for early development of retina, preventing premature exit of retinal progenitor cells from the cell cycle. This effect may also be mediated by its action on mitochondria. Through the regulation of MMACHC gene expression, controls cobalamin metabolism. Required for normal brain development and neural precursor differentiation. Involved in cell growth. The sequence is that of THAP domain-containing protein 11 (Thap11) from Mus musculus (Mouse).